The following is a 500-amino-acid chain: ERAD-associated E3 ubiquitin-protein ligase HRD1 (500 aa).

At 1–3 (MIR) the chain is on the cytoplasmic side. Residues 4 to 24 (LQTYAAFSLMATATAVYYAFS) form a helical membrane-spanning segment. The Lumenal segment spans residues 25 to 40 (SREQFYPAMVYLSTSK). Residues 41-61 (ICFVLLLNTGLVAMCVAWQLV) traverse the membrane as a helical segment. Topologically, residues 62-98 (KRLFLGTLREAEVERLNEQAWREVVEILFAVTIFRQD) are cytoplasmic. Residues 99-119 (FSVSFLAMVAALLLVKALHWL) form a helical membrane-spanning segment. Residues 120–135 (AQKRVEYIETTPSVPM) lie on the Lumenal side of the membrane. A helical transmembrane segment spans residues 136-156 (LSHARIVSFMLFLLVVDCLFL). Topologically, residues 157–170 (SNSLRSLIHKREAS) are cytoplasmic. Residues 171-191 (VAIFFSFEYMILATSTVSTFV) traverse the membrane as a helical segment. Residues 192–225 (KYIFYVSDMLMEGQWEKKAVYTFYLELISDLVHL) lie on the Lumenal side of the membrane. A helical membrane pass occupies residues 226–246 (SLYMLFFIAIFLNYGVPLHLI). The Cytoplasmic segment spans residues 247–500 (RELYETFRNF…NENGEHTKSD (254 aa)). An RING-type; atypical zinc finger spans residues 292-330 (CIICREEMTTAKKLLCGHLFHVHCLRSWLERQHTCPTCR). Disordered stretches follow at residues 337–375 (DNGR…SRRQ) and 398–438 (NNLN…SAPT). Positions 348–358 (VHPGVQPVPGN) are enriched in low complexity. The span at 398–426 (NNLNRYSTPPQSTSNGPQSGEASTSNQSP) shows a compositional bias: polar residues.

This sequence belongs to the HRD1 family.

It localises to the endoplasmic reticulum membrane. It catalyses the reaction S-ubiquitinyl-[E2 ubiquitin-conjugating enzyme]-L-cysteine + [acceptor protein]-L-lysine = [E2 ubiquitin-conjugating enzyme]-L-cysteine + N(6)-ubiquitinyl-[acceptor protein]-L-lysine.. The protein operates within protein modification; protein ubiquitination. Functionally, probable component of the HRD1 ubiquitin ligase complex that mediates the rapid degradation of misfolded endoplasmic reticulum (ER) proteins, a process called ER-associated degradation (ERAD). The polypeptide is ERAD-associated E3 ubiquitin-protein ligase HRD1 (Oryza sativa subsp. japonica (Rice)).